Reading from the N-terminus, the 426-residue chain is MKQLRLNPISKVHGTVNIPGSKSISNRALLLATLAEGKTRLTNLLDSDDIRHMLTALKQLGVNYQLSDNNRVCEVEGLSGVINSDTAQTLFLGNAGTAMRPLCAALTLGSGEFTLTGEPRMEERPIGDLVDALNALGADIRYLKQPGFPPLTINATGLNGGDVEIAGDLSSQFLTALLMVTPLAKAQVNIKIKGELVSKPYIDITIALMAQFGVTVINHDYQRFEIPAGQKYVSPGTVLVEGDASSASYFLAAGAIQGGEVKVTGVGLKSIQGDVKFAEVLEAMGAQIEWGDDFIIARSAPLHGVDLDMNHIPDAAMTIATAALFATGTTTLRNIYNWRIKETDRLAAMATELRKVGAEVEEGHDYIRVTAPAQLNTADIDTYNDHRMAMCFSLMAFADCGITINDPDCTSKTFPDYFAQFAALAQ.

Residues Lys-22, Ser-23, and Arg-27 each contribute to the 3-phosphoshikimate site. A phosphoenolpyruvate-binding site is contributed by Lys-22. 2 residues coordinate phosphoenolpyruvate: Gly-96 and Arg-124. Positions 170, 171, 172, 198, 314, 337, and 341 each coordinate 3-phosphoshikimate. Position 172 (Gln-172) interacts with phosphoenolpyruvate. Asp-314 serves as the catalytic Proton acceptor. Phosphoenolpyruvate contacts are provided by Arg-345, Arg-387, and Lys-412.

It belongs to the EPSP synthase family. As to quaternary structure, monomer.

It is found in the cytoplasm. It catalyses the reaction 3-phosphoshikimate + phosphoenolpyruvate = 5-O-(1-carboxyvinyl)-3-phosphoshikimate + phosphate. The protein operates within metabolic intermediate biosynthesis; chorismate biosynthesis; chorismate from D-erythrose 4-phosphate and phosphoenolpyruvate: step 6/7. Functionally, catalyzes the transfer of the enolpyruvyl moiety of phosphoenolpyruvate (PEP) to the 5-hydroxyl of shikimate-3-phosphate (S3P) to produce enolpyruvyl shikimate-3-phosphate and inorganic phosphate. This chain is 3-phosphoshikimate 1-carboxyvinyltransferase, found in Shewanella loihica (strain ATCC BAA-1088 / PV-4).